Consider the following 173-residue polypeptide: Cytochrome c-type biogenesis protein CcmE (173 aa).

Residues Met-1–Arg-8 are Cytoplasmic-facing. The chain crosses the membrane as a helical; Signal-anchor for type II membrane protein span at residues Phe-9–Ala-29. Residues Leu-30 to Lys-173 are Periplasmic-facing. Residues His-131 and Tyr-135 each coordinate heme. The tract at residues Glu-139–Lys-173 is disordered. Basic and acidic residues predominate over residues Ala-156–Lys-173.

This sequence belongs to the CcmE/CycJ family.

It localises to the cell inner membrane. Its function is as follows. Heme chaperone required for the biogenesis of c-type cytochromes. Transiently binds heme delivered by CcmC and transfers the heme to apo-cytochromes in a process facilitated by CcmF and CcmH. The polypeptide is Cytochrome c-type biogenesis protein CcmE (Haemophilus influenzae (strain 86-028NP)).